The chain runs to 149 residues: NADH-ubiquinone oxidoreductase chain 6 (149 aa).

The next 4 membrane-spanning stretches (helical) occupy residues 23–43, 51–71, 83–103, and 114–134; these read ILML…FYFI, MMMI…MISL, LSVT…MTKL, and VNFV…LTII.

The protein belongs to the complex I subunit 6 family.

Its subcellular location is the mitochondrion membrane. The enzyme catalyses a ubiquinone + NADH + 5 H(+)(in) = a ubiquinol + NAD(+) + 4 H(+)(out). Its function is as follows. Core subunit of the mitochondrial membrane respiratory chain NADH dehydrogenase (Complex I) that is believed to belong to the minimal assembly required for catalysis. Complex I functions in the transfer of electrons from NADH to the respiratory chain. The immediate electron acceptor for the enzyme is believed to be ubiquinone. This Rhipicephalus sanguineus (Brown dog tick) protein is NADH-ubiquinone oxidoreductase chain 6 (ND6).